Reading from the N-terminus, the 415-residue chain is 4-hydroxy-3-methylbut-2-en-1-yl diphosphate synthase (flavodoxin) (415 aa).

Positions 298, 301, 344, and 351 each coordinate [4Fe-4S] cluster.

Belongs to the IspG family. The cofactor is [4Fe-4S] cluster.

It catalyses the reaction (2E)-4-hydroxy-3-methylbut-2-enyl diphosphate + oxidized [flavodoxin] + H2O + 2 H(+) = 2-C-methyl-D-erythritol 2,4-cyclic diphosphate + reduced [flavodoxin]. It participates in isoprenoid biosynthesis; isopentenyl diphosphate biosynthesis via DXP pathway; isopentenyl diphosphate from 1-deoxy-D-xylulose 5-phosphate: step 5/6. Converts 2C-methyl-D-erythritol 2,4-cyclodiphosphate (ME-2,4cPP) into 1-hydroxy-2-methyl-2-(E)-butenyl 4-diphosphate. The chain is 4-hydroxy-3-methylbut-2-en-1-yl diphosphate synthase (flavodoxin) from Solibacter usitatus (strain Ellin6076).